Here is a 312-residue protein sequence, read N- to C-terminus: 1-(5-phosphoribosyl)-5-[(5-phosphoribosylamino)methylideneamino] imidazole-4-carboxamide isomerase HISN3, chloroplastic (312 aa).

Residues 1–67 constitute a chloroplast transit peptide; the sequence is MRSPASTPSI…IHKGKVKQIV (67 aa). Residue Asp57 participates in 1-(5-phospho-beta-D-ribosyl)-5-[(5-phospho-beta-D-ribosylamino)methylideneamino]imidazole-4-carboxamide binding. Position 65 (Gln65) interacts with 5-[(5-phospho-1-deoxy-D-ribulos-1-ylimino)methylamino]-1-(5-phospho-beta-D-ribosyl)imidazole-4-carboxamide. Gln65 and Ile66 together coordinate Na(+). Gly68 contacts 1-(5-phospho-beta-D-ribosyl)-5-[(5-phospho-beta-D-ribosylamino)methylideneamino]imidazole-4-carboxamide. 4 residues coordinate 5-[(5-phospho-1-deoxy-D-ribulos-1-ylimino)methylamino]-1-(5-phospho-beta-D-ribosyl)imidazole-4-carboxamide: His108, Gly138, Thr158, and Ser159. 1-(5-phospho-beta-D-ribosyl)-5-[(5-phospho-beta-D-ribosylamino)methylideneamino]imidazole-4-carboxamide is bound by residues Gly138, Thr158, and Ser159. Ser159 and Phe162 together coordinate Na(+). 1-(5-phospho-beta-D-ribosyl)-5-[(5-phospho-beta-D-ribosylamino)methylideneamino]imidazole-4-carboxamide-binding residues include Asp187, Arg203, Trp204, and His230. Asp187 provides a ligand contact to 5-[(5-phospho-1-deoxy-D-ribulos-1-ylimino)methylamino]-1-(5-phospho-beta-D-ribosyl)imidazole-4-carboxamide. Residue Trp204 participates in 5-[(5-phospho-1-deoxy-D-ribulos-1-ylimino)methylamino]-1-(5-phospho-beta-D-ribosyl)imidazole-4-carboxamide binding. Glu235 serves as a coordination point for Na(+). 1-(5-phospho-beta-D-ribosyl)-5-[(5-phospho-beta-D-ribosylamino)methylideneamino]imidazole-4-carboxamide contacts are provided by Gly236, Gly262, Gly285, and Ser286. Gly236, Gly262, Gly285, and Ser286 together coordinate 5-[(5-phospho-1-deoxy-D-ribulos-1-ylimino)methylamino]-1-(5-phospho-beta-D-ribosyl)imidazole-4-carboxamide.

The protein belongs to the HisA/HisF family. Na(+) is required as a cofactor.

The protein resides in the plastid. The protein localises to the chloroplast. The catalysed reaction is 1-(5-phospho-beta-D-ribosyl)-5-[(5-phospho-beta-D-ribosylamino)methylideneamino]imidazole-4-carboxamide = 5-[(5-phospho-1-deoxy-D-ribulos-1-ylimino)methylamino]-1-(5-phospho-beta-D-ribosyl)imidazole-4-carboxamide. The protein operates within amino-acid biosynthesis; L-histidine biosynthesis; L-histidine from 5-phospho-alpha-D-ribose 1-diphosphate: step 4/9. Component of the histidine biosynthesis pathway that catalyzes the isomerization of 5'-ProFAR (pro-phosphoribosyl formimino-5-aminoimidazole-4-carboxamide ribonucleotide, referred as 1-(5-phospho-beta-D-ribosyl)-5-[(5-phospho-beta-D-ribosylamino)methylideneamino]imidazole-4-carboxamide) to PrFAR (phosphoribulosyl formimino-5-aminoimidazole-4-carboxamide ribonucleotide, referred as 5-[(5-phospho-1-deoxy-D-ribulos-1-ylimino)methylamino]-1-(5-phospho-beta-D-ribosyl)imidazole-4-carboxamide). The chain is 1-(5-phosphoribosyl)-5-[(5-phosphoribosylamino)methylideneamino] imidazole-4-carboxamide isomerase HISN3, chloroplastic from Medicago truncatula (Barrel medic).